A 133-amino-acid chain; its full sequence is Antifungal protein ginkbilobin-like protein 1 (133 aa).

The N-terminal stretch at 1-24 (MSMGSFGFALAVMVLAVLVASAAG) is a signal peptide. The Gnk2-homologous domain occupies 28-133 (TNFVSSACNT…CFIRYEQYSI (106 aa)). Cystine bridges form between Cys35–Cys111, Cys87–Cys96, and Cys99–Cys124. Alpha-D-mannopyranose is bound at residue Asn36. Alpha-D-mannopyranose-binding residues include Arg118 and Glu129.

Its function is as follows. Exerts antifungal activity through its carbohydrate-binding specificity. This Picea sitchensis (Sitka spruce) protein is Antifungal protein ginkbilobin-like protein 1.